A 478-amino-acid polypeptide reads, in one-letter code: Ribulose bisphosphate carboxylase large chain (478 aa).

Positions 1–2 (MS) are excised as a propeptide. Position 3 is an N-acetylproline (P3). K14 carries the N6,N6,N6-trimethyllysine modification. Substrate-binding residues include N123 and T173. K175 functions as the Proton acceptor in the catalytic mechanism. Residue K177 coordinates substrate. Positions 201, 203, and 204 each coordinate Mg(2+). N6-carboxylysine is present on K201. Residue H294 is the Proton acceptor of the active site. Positions 295, 327, and 379 each coordinate substrate.

Belongs to the RuBisCO large chain family. Type I subfamily. In terms of assembly, heterohexadecamer of 8 large chains and 8 small chains; disulfide-linked. The disulfide link is formed within the large subunit homodimers. It depends on Mg(2+) as a cofactor. The disulfide bond which can form in the large chain dimeric partners within the hexadecamer appears to be associated with oxidative stress and protein turnover.

It is found in the plastid. Its subcellular location is the chloroplast. It catalyses the reaction 2 (2R)-3-phosphoglycerate + 2 H(+) = D-ribulose 1,5-bisphosphate + CO2 + H2O. The enzyme catalyses D-ribulose 1,5-bisphosphate + O2 = 2-phosphoglycolate + (2R)-3-phosphoglycerate + 2 H(+). RuBisCO catalyzes two reactions: the carboxylation of D-ribulose 1,5-bisphosphate, the primary event in carbon dioxide fixation, as well as the oxidative fragmentation of the pentose substrate in the photorespiration process. Both reactions occur simultaneously and in competition at the same active site. The protein is Ribulose bisphosphate carboxylase large chain of Lemna minor (Common duckweed).